Here is a 759-residue protein sequence, read N- to C-terminus: Forkhead box protein M1 (759 aa).

Disordered regions lie at residues 1-54 and 94-165; these read MRTS…AESS and KGKE…QRQE. Over residues 36–54 the composition is skewed to polar residues; it reads PGQQEPTQAQASQDVAESS. A compositionally biased stretch (low complexity) spans 141–151; it reads LGPKPGAKGVP. Residues Lys200 and Lys324 each participate in a glycyl lysine isopeptide (Lys-Gly) (interchain with G-Cter in SUMO2) cross-link. Positions 234–326 form a DNA-binding region, fork-head; it reads ERPPYSYMAM…LTLDQVFKPL (93 aa). The interval 328–349 is disordered; sequence PGSPQSPEHLESQQKRPNPELR. Residue Ser330 is modified to Phosphoserine. Positions 335-349 are enriched in basic and acidic residues; that stretch reads EHLESQQKRPNPELR. Lys355 participates in a covalent cross-link: Glycyl lysine isopeptide (Lys-Gly) (interchain with G-Cter in SUMO2). At Ser375 the chain carries Phosphoserine; by CHEK2. Residues Lys421 and Lys439 each participate in a glycyl lysine isopeptide (Lys-Gly) (interchain with G-Cter in SUMO2) cross-link. Ser521 is subject to Phosphoserine. 3 disordered regions span residues 530–556, 572–643, and 681–706; these read LVTK…CLDE, MEIL…PQGA, and LASD…LQVP. The span at 531-542 shows a compositional bias: basic and acidic residues; that stretch reads VTKRREKREVSR. Over residues 604 to 613 the composition is skewed to polar residues; it reads PVSSTPSKSV. Residue Thr608 is modified to Phosphothreonine; by CDK1. Phosphothreonine is present on Thr624. Residues Ser726 and Ser735 each carry the phosphoserine; by PLK1 modification.

Phosphorylated in M (mitotic) phase. Phosphorylation by the checkpoint kinase CHEK2 in response to DNA damage increases the FOXM1 protein stability probably stimulating the transcription of genes involved in DNA repair. Phosphorylated by CDK1 in late S and G2 phases, creating docking sites for the POLO box domains of PLK1. Subsequently, PLK1 binds and phosphorylates FOXM1, leading to activation of transcriptional activity and subsequent enhanced expression of key mitotic regulators. Phosphorylated by GSK3B leading to ubiquitination and proteasomal degradation. Highly expressed in thymus and testis, but weakly in intestine and lung. Appears to be expressed only in adult organs containing proliferating/cycling cells or in response to growth factors.

It is found in the nucleus. Transcription factor regulating the expression of cell cycle genes essential for DNA replication and mitosis. Plays a role in the control of cell proliferation. Also plays a role in DNA break repair, participating in the DNA damage checkpoint response. Promotes transcription of PHB2. The chain is Forkhead box protein M1 (Foxm1) from Rattus norvegicus (Rat).